We begin with the raw amino-acid sequence, 58 residues long: Large ribosomal subunit protein eL20 (58 aa).

Residues Thr37–Ala58 are disordered. Basic and acidic residues predominate over residues Pro48–Ala58.

It belongs to the eukaryotic ribosomal protein eL20 family. As to quaternary structure, part of the 50S ribosomal subunit. Binds 23S rRNA.

The sequence is that of Large ribosomal subunit protein eL20 from Halorubrum lacusprofundi (strain ATCC 49239 / DSM 5036 / JCM 8891 / ACAM 34).